The following is a 182-amino-acid chain: Biotin transporter BioY2 (182 aa).

5 consecutive transmembrane segments (helical) span residues 12-32 (IALG…IGIV), 54-74 (FFAI…FTGG), 78-98 (IAVL…MGTL), 111-131 (IPAF…GTLW), and 150-170 (PFVF…LALI).

It belongs to the BioY family. As to quaternary structure, in E.coli forms a stable energy-coupling factor (ECF) transporter complex composed of 2 membrane-embedded substrate-binding protein (S component), 2 ATP-binding proteins (A and A' components) and 2 transmembrane proteins (T component), probably with a stoichiometry of 2:1:1:2. May be able to interact with more than 1 S component at a time.

The protein resides in the cell membrane. In terms of biological role, probably a biotin-binding protein that interacts with the energy-coupling factor (ECF) ABC-transporter complex. Unlike classic ABC transporters this ECF transporter provides the energy necessary to transport a number of different substrates. The substrates themselves are bound by transmembrane, not extracytoplasmic soluble proteins. The sequence is that of Biotin transporter BioY2 (bioY2) from Lactococcus lactis subsp. cremoris (strain MG1363).